The following is a 478-amino-acid chain: Proline--tRNA ligase (478 aa).

It belongs to the class-II aminoacyl-tRNA synthetase family. ProS type 3 subfamily. Homodimer.

It localises to the cytoplasm. It carries out the reaction tRNA(Pro) + L-proline + ATP = L-prolyl-tRNA(Pro) + AMP + diphosphate. Its function is as follows. Catalyzes the attachment of proline to tRNA(Pro) in a two-step reaction: proline is first activated by ATP to form Pro-AMP and then transferred to the acceptor end of tRNA(Pro). This is Proline--tRNA ligase from Clostridium novyi (strain NT).